Reading from the N-terminus, the 279-residue chain is Tryptophan 2,3-dioxygenase (279 aa).

Substrate is bound by residues 48–52, Tyr110, and Arg114; that span reads FIIQH. Position 237 (His237) interacts with heme. Substrate is bound at residue Thr251.

It belongs to the tryptophan 2,3-dioxygenase family. Homotetramer. Heme serves as cofactor.

The catalysed reaction is L-tryptophan + O2 = N-formyl-L-kynurenine. It functions in the pathway amino-acid degradation; L-tryptophan degradation via kynurenine pathway; L-kynurenine from L-tryptophan: step 1/2. In terms of biological role, heme-dependent dioxygenase that catalyzes the oxidative cleavage of the L-tryptophan (L-Trp) pyrrole ring and converts L-tryptophan to N-formyl-L-kynurenine. Catalyzes the oxidative cleavage of the indole moiety. The protein is Tryptophan 2,3-dioxygenase of Bradyrhizobium sp. (strain ORS 278).